Consider the following 842-residue polypeptide: Protein translocase subunit SecA 1 (842 aa).

Residues Gln-85, 103–107 (GEGKT), and Asp-493 contribute to the ATP site. Residues Cys-824, Cys-826, Cys-835, and His-836 each contribute to the Zn(2+) site.

The protein belongs to the SecA family. Monomer and homodimer. Part of the essential Sec protein translocation apparatus which comprises SecA, SecYEG and auxiliary proteins SecDF. Other proteins may also be involved. The cofactor is Zn(2+).

The protein localises to the cell membrane. It is found in the cytoplasm. It catalyses the reaction ATP + H2O + cellular proteinSide 1 = ADP + phosphate + cellular proteinSide 2.. Functionally, part of the Sec protein translocase complex. Interacts with the SecYEG preprotein conducting channel. Has a central role in coupling the hydrolysis of ATP to the transfer of proteins into and across the cell membrane, serving as an ATP-driven molecular motor driving the stepwise translocation of polypeptide chains across the membrane. The chain is Protein translocase subunit SecA 1 from Streptococcus agalactiae serotype Ia (strain ATCC 27591 / A909 / CDC SS700).